We begin with the raw amino-acid sequence, 599 residues long: Histone-arginine methyltransferase CARMER (599 aa).

In terms of domain architecture, SAM-dependent MTase PRMT-type spans 127–434 (ASQYFQFYGY…QRQSYDVEID (308 aa)). The S-adenosyl-L-methionine site is built by Q140, R149, G173, E195, E224, and T252. Residue R487 is modified to Asymmetric dimethylarginine; by autocatalysis.

Belongs to the class I-like SAM-binding methyltransferase superfamily. Protein arginine N-methyltransferase family. In terms of assembly, homodimer. In terms of processing, the dimethylated protein is the major form.

Its subcellular location is the cytoplasm. The protein resides in the nucleus. The enzyme catalyses L-arginyl-[protein] + 2 S-adenosyl-L-methionine = N(omega),N(omega)-dimethyl-L-arginyl-[protein] + 2 S-adenosyl-L-homocysteine + 2 H(+). Methylates (mono- and asymmetric dimethylation) the guanidino nitrogens of arginyl residues in proteins. May methylate histone H3 at 'Arg-17' and activate transcription via chromatin remodeling. The polypeptide is Histone-arginine methyltransferase CARMER (Art4) (Culex quinquefasciatus (Southern house mosquito)).